Reading from the N-terminus, the 241-residue chain is Probable transcriptional regulatory protein H16_A0916 (241 aa).

This sequence belongs to the TACO1 family.

It localises to the cytoplasm. In Cupriavidus necator (strain ATCC 17699 / DSM 428 / KCTC 22496 / NCIMB 10442 / H16 / Stanier 337) (Ralstonia eutropha), this protein is Probable transcriptional regulatory protein H16_A0916.